We begin with the raw amino-acid sequence, 339 residues long: Glyceraldehyde-3-phosphate dehydrogenase (339 aa).

NAD(+) is bound by residues 12-13 (RI), aspartate 34, arginine 78, and threonine 120. Residues 149–151 (SCT), threonine 180, 209–210 (TG), and arginine 232 each bind D-glyceraldehyde 3-phosphate. Cysteine 150 serves as the catalytic Nucleophile. NAD(+) is bound at residue asparagine 319.

It belongs to the glyceraldehyde-3-phosphate dehydrogenase family. Homotetramer.

It localises to the cytoplasm. It carries out the reaction D-glyceraldehyde 3-phosphate + phosphate + NAD(+) = (2R)-3-phospho-glyceroyl phosphate + NADH + H(+). It participates in carbohydrate degradation; glycolysis; pyruvate from D-glyceraldehyde 3-phosphate: step 1/5. Its function is as follows. Catalyzes the oxidative phosphorylation of glyceraldehyde 3-phosphate (G3P) to 1,3-bisphosphoglycerate (BPG) using the cofactor NAD. The first reaction step involves the formation of a hemiacetal intermediate between G3P and a cysteine residue, and this hemiacetal intermediate is then oxidized to a thioester, with concomitant reduction of NAD to NADH. The reduced NADH is then exchanged with the second NAD, and the thioester is attacked by a nucleophilic inorganic phosphate to produce BPG. This Haemophilus influenzae (strain ATCC 51907 / DSM 11121 / KW20 / Rd) protein is Glyceraldehyde-3-phosphate dehydrogenase (gapA).